The primary structure comprises 479 residues: Glutamate receptor U1 (479 aa).

The N-terminal stretch at 1–17 is a signal peptide; the sequence is MEKSLLFLFAVTLLSVG. Over 18-163 the chain is Extracellular; sequence CTDAGESKGS…LFGFLTPFSK (146 aa). An N-linked (GlcNAc...) asparagine glycan is attached at Asn79. Residues 164–184 form a helical membrane-spanning segment; it reads ETWIGILVAYMVTSLCLFLVG. Residues 185-229 are Cytoplasmic-facing; the sequence is RLSPCEWTELSTEQNNFTFLNSLWFGAGAFTLQGAEPHPKSVSAR. Residues 230–250 traverse the membrane as a helical segment; that stretch reads IIAVIWWIFSIVLVAAYIASF. Residues 251–414 are Extracellular-facing; the sequence is AAFLNSDSVQ…AGWNPVQPHT (164 aa). A glycan (N-linked (GlcNAc...) asparagine) is linked at Asn282. A helical membrane pass occupies residues 415 to 435; it reads LGGIFLILGIGLALGVIAALI. The Cytoplasmic segment spans residues 436–479; that stretch reads ELVLKARNNADQQKKSCCSAFSEEMGERLGTNKENQGAVDSVKS.

Belongs to the glutamate-gated ion channel (TC 1.A.10.1) family. As to quaternary structure, homomeric.

Its subcellular location is the cell membrane. The protein localises to the postsynaptic cell membrane. In terms of biological role, receptor for glutamate. L-glutamate acts as an excitatory neurotransmitter at many synapses in the central nervous system. The postsynaptic actions of Glu are mediated by a variety of receptors that are named according to their selective agonists. This receptor binds domoate &gt; kainate &gt; AMPA &gt; NBQX &gt; glutamate. This chain is Glutamate receptor U1 (kbp), found in Xenopus laevis (African clawed frog).